A 691-amino-acid chain; its full sequence is Elongation factor G (691 aa).

In terms of domain architecture, tr-type G spans 8–282; sequence ERVRNIGIAA…AVVDYLPAPI (275 aa). GTP contacts are provided by residues 17-24, 81-85, and 135-138; these read AHIDAGKT, DTPGH, and NKMD.

The protein belongs to the TRAFAC class translation factor GTPase superfamily. Classic translation factor GTPase family. EF-G/EF-2 subfamily.

It is found in the cytoplasm. Catalyzes the GTP-dependent ribosomal translocation step during translation elongation. During this step, the ribosome changes from the pre-translocational (PRE) to the post-translocational (POST) state as the newly formed A-site-bound peptidyl-tRNA and P-site-bound deacylated tRNA move to the P and E sites, respectively. Catalyzes the coordinated movement of the two tRNA molecules, the mRNA and conformational changes in the ribosome. The sequence is that of Elongation factor G from Synechococcus sp. (strain CC9311).